The following is a 476-amino-acid chain: uncharacterized protein (476 aa).

The first 24 residues, 1–24 (MIRKSATGVIVALAVIWGGGTWYT), serve as a signal peptide directing secretion.

It to E.coli YdgA and H.influenzae HI_1236.

This is an uncharacterized protein from Escherichia coli (strain K12).